We begin with the raw amino-acid sequence, 194 residues long: Histone H1.0 (194 aa).

N-acetylmethionine is present on methionine 1. Positions 1–11 (MTENSTSTPAA) are enriched in low complexity. The interval 1-29 (MTENSTSTPAAKPKRAKASKKSTDHPKYS) is disordered. Threonine 2 is modified (N-acetylthreonine; in Histone H1.0, N-terminally processed). Positions 24 to 97 (DHPKYSDMIV…GASGSFRLAK (74 aa)) constitute an H15 domain. Arginine 42 carries the citrulline modification. Positions 83–194 (QTKGVGASGS…SSAKRTGKKK (112 aa)) are disordered. ADP-ribosylserine is present on serine 104. Residues 105-194 (VAFKKTKKEV…SSAKRTGKKK (90 aa)) show a composition bias toward basic residues.

It belongs to the histone H1/H5 family. Post-translationally, ADP-ribosylated on Ser-104 in response to DNA damage.

It is found in the nucleus. The protein resides in the chromosome. Its function is as follows. Histones H1 are necessary for the condensation of nucleosome chains into higher-order structures. The histones H1.0 are found in cells that are in terminal stages of differentiation or that have low rates of cell division. The polypeptide is Histone H1.0 (H1-0) (Bos taurus (Bovine)).